Here is a 344-residue protein sequence, read N- to C-terminus: Lipase chaperone (344 aa).

The helical transmembrane segment at 13 to 35 threads the bilayer; it reads RIAPYGAAGLAAIVGVAIWSGTG.

The protein belongs to the lipase chaperone family.

It is found in the cell inner membrane. In terms of biological role, may be involved in the folding of the extracellular lipase during its passage through the periplasm. The sequence is that of Lipase chaperone from Burkholderia vietnamiensis (strain G4 / LMG 22486) (Burkholderia cepacia (strain R1808)).